The primary structure comprises 80 residues: FXYD domain-containing ion transport regulator 7 (80 aa).

The Extracellular portion of the chain corresponds to 1 to 22 (MATPTQSPTNVPEETDPFFYDY). 3 O-linked (GlcNAc) threonine glycosylation sites follow: Thr-3, Thr-5, and Thr-9. The chain crosses the membrane as a helical span at residues 23–45 (ATVQTVGMTLATIMFVLGIIIIL). The Cytoplasmic portion of the chain corresponds to 46–80 (SKKVKCRKADSRSESPTCKSCKSELPSSAPGGGGV). Positions 55 to 80 (DSRSESPTCKSCKSELPSSAPGGGGV) are disordered. At Ser-73 the chain carries Phosphoserine.

It belongs to the FXYD family. In terms of assembly, regulatory subunit of the sodium/potassium-transporting ATPase which is composed of a catalytic alpha subunit, a non-catalytic beta subunit and an additional regulatory subunit. The regulatory subunit, a member of the FXYD protein family, modulates the enzymatic activity in a tissue- and isoform-specific way by changing affinities of the Na+/K+-ATPase toward Na(+), K(+) or ATP. O-glycosylated; required for stabilization and translocation to the plasma membrane.

Its subcellular location is the cell membrane. Functionally, associates with and regulates the activity of the sodium/potassium-transporting ATPase (NKA) which catalyzes the hydrolysis of ATP coupled with the exchange of Na(+) and K(+) ions across the plasma membrane. Reduces the apparent affinity for external K(+), an effect that depends on the presence of external Na(+) and voltage. Increases the apparent affinity for intracellular Na(+). The protein is FXYD domain-containing ion transport regulator 7 (Fxyd7) of Mus musculus (Mouse).